The chain runs to 252 residues: Imidazole glycerol phosphate synthase subunit HisF (252 aa).

Active-site residues include Asp11 and Asp130.

This sequence belongs to the HisA/HisF family. Heterodimer of HisH and HisF.

Its subcellular location is the cytoplasm. It catalyses the reaction 5-[(5-phospho-1-deoxy-D-ribulos-1-ylimino)methylamino]-1-(5-phospho-beta-D-ribosyl)imidazole-4-carboxamide + L-glutamine = D-erythro-1-(imidazol-4-yl)glycerol 3-phosphate + 5-amino-1-(5-phospho-beta-D-ribosyl)imidazole-4-carboxamide + L-glutamate + H(+). It participates in amino-acid biosynthesis; L-histidine biosynthesis; L-histidine from 5-phospho-alpha-D-ribose 1-diphosphate: step 5/9. In terms of biological role, IGPS catalyzes the conversion of PRFAR and glutamine to IGP, AICAR and glutamate. The HisF subunit catalyzes the cyclization activity that produces IGP and AICAR from PRFAR using the ammonia provided by the HisH subunit. The chain is Imidazole glycerol phosphate synthase subunit HisF from Dictyoglomus turgidum (strain DSM 6724 / Z-1310).